The primary structure comprises 111 residues: Large ribosomal subunit protein uL22 (111 aa).

It belongs to the universal ribosomal protein uL22 family. Part of the 50S ribosomal subunit.

Functionally, this protein binds specifically to 23S rRNA; its binding is stimulated by other ribosomal proteins, e.g. L4, L17, and L20. It is important during the early stages of 50S assembly. It makes multiple contacts with different domains of the 23S rRNA in the assembled 50S subunit and ribosome. The globular domain of the protein is located near the polypeptide exit tunnel on the outside of the subunit, while an extended beta-hairpin is found that lines the wall of the exit tunnel in the center of the 70S ribosome. The polypeptide is Large ribosomal subunit protein uL22 (Polynucleobacter necessarius subsp. necessarius (strain STIR1)).